Reading from the N-terminus, the 349-residue chain is SUMO-activating enzyme subunit 1 (349 aa).

Met1 bears the N-acetylmethionine mark. Val2 bears the N-acetylvaline; in SUMO-activating enzyme subunit 1, N-terminally processed mark. Residue Ser15 is modified to Phosphoserine. Lys201 bears the N6-acetyllysine mark.

The protein belongs to the ubiquitin-activating E1 family. Heterodimer of SAE1 and UBA2/SAE2. The heterodimer corresponds to the two domains that are encoded on a single polypeptide chain in ubiquitin-activating enzyme E1. Interacts with UBE2I.

The protein localises to the nucleus. It participates in protein modification; protein sumoylation. Its function is as follows. The heterodimer acts as an E1 ligase for SUMO1, SUMO2, SUMO3, and probably SUMO4. It mediates ATP-dependent activation of SUMO proteins followed by formation of a thioester bond between a SUMO protein and a conserved active site cysteine residue on UBA2/SAE2. The sequence is that of SUMO-activating enzyme subunit 1 (Sae1) from Rattus norvegicus (Rat).